The following is a 101-amino-acid chain: Large ribosomal subunit protein uL23 (101 aa).

This sequence belongs to the universal ribosomal protein uL23 family. Part of the 50S ribosomal subunit. Contacts protein L29, and trigger factor when it is bound to the ribosome.

In terms of biological role, one of the early assembly proteins it binds 23S rRNA. One of the proteins that surrounds the polypeptide exit tunnel on the outside of the ribosome. Forms the main docking site for trigger factor binding to the ribosome. In Corynebacterium jeikeium (strain K411), this protein is Large ribosomal subunit protein uL23.